The following is a 701-amino-acid chain: Polyribonucleotide nucleotidyltransferase (701 aa).

Positions 487 and 493 each coordinate Mg(2+). Residues 554 to 613 (PTMIAMKIDTDKIRDVIGKGGATIRAICEETKASIDIEDDGSIKIFGETKEAAEAAKQRI) form the KH domain. In terms of domain architecture, S1 motif spans 623–691 (GKIYVGKVER…NRGRIKLSIK (69 aa)).

The protein belongs to the polyribonucleotide nucleotidyltransferase family. As to quaternary structure, component of the RNA degradosome, which is a multiprotein complex involved in RNA processing and mRNA degradation. Requires Mg(2+) as cofactor.

It is found in the cytoplasm. It carries out the reaction RNA(n+1) + phosphate = RNA(n) + a ribonucleoside 5'-diphosphate. Its function is as follows. Involved in mRNA degradation. Catalyzes the phosphorolysis of single-stranded polyribonucleotides processively in the 3'- to 5'-direction. The sequence is that of Polyribonucleotide nucleotidyltransferase from Pseudomonas putida (strain GB-1).